The sequence spans 284 residues: MTHAIEVRGLSKSFRADRKALDDVTLQIAPGEMVALLGASGSGKSTLLRHVAGFVTGDAGSGEILVNGRTVQRNGRLARDVRRVRADIGFVFQQFNLVGRLPVITNVLVGMLTRVPKWRSLLRIFKASEVQAGLDALAQVGIDDYAFQRASTLSGGQQQRAAIARTLVQNAQVILADEPIASLDPESSRRVMSQLAQINRTRKVAVVVSLHQVDVAMRYCPRVVALRHGKVVYDGPSAALTQQMLRDLYGSEADELLHDSVPEAPSCAEGVPAPVMVRMDLAAA.

An ABC transporter domain is found at 5-253 (IEVRGLSKSF…MLRDLYGSEA (249 aa)). Residue 38–45 (GASGSGKS) participates in ATP binding.

The protein belongs to the ABC transporter superfamily. Phosphonates importer (TC 3.A.1.9.1) family. As to quaternary structure, the complex is composed of two ATP-binding proteins (PhnC), two transmembrane proteins (PhnE) and a solute-binding protein (PhnD).

It localises to the cell inner membrane. It carries out the reaction phosphonate(out) + ATP + H2O = phosphonate(in) + ADP + phosphate + H(+). Its function is as follows. Part of the ABC transporter complex PhnCDE involved in phosphonates import. Responsible for energy coupling to the transport system. In Cupriavidus metallidurans (strain ATCC 43123 / DSM 2839 / NBRC 102507 / CH34) (Ralstonia metallidurans), this protein is Phosphonates import ATP-binding protein PhnC 1.